The chain runs to 986 residues: Ephrin type-A receptor 4 (986 aa).

An N-terminal signal peptide occupies residues 1 to 19; sequence MAGIFYFALFSCLFGICDA. The Extracellular segment spans residues 20 to 547; it reads VTGSRVYPAN…RIIGDGANST (528 aa). In terms of domain architecture, Eph LBD spans 30 to 209; it reads EVTLLDSRSV…FYKKCPLTVR (180 aa). N-linked (GlcNAc...) asparagine glycosylation is found at Asn-235, Asn-340, and Asn-408. 2 Fibronectin type-III domains span residues 328–439 and 440–537; these read PPSA…TNQA and APSS…TVPS. Asn-545 carries N-linked (GlcNAc...) asparagine glycosylation. Residues 548 to 569 form a helical membrane-spanning segment; sequence VLLVSVSGSVVLVVILIAAFVI. Over 570–986 the chain is Cytoplasmic; it reads SRRRSKYSKA…QQMHGRMVPV (417 aa). A phosphotyrosine; by autocatalysis mark is found at Tyr-596 and Tyr-602. The Protein kinase domain maps to 621 to 882; sequence IKIEKVIGVG…QIVNMLDKLI (262 aa). ATP-binding positions include 627–635 and Lys-653; that span reads IGVGEFGEV. The active-site Proton acceptor is the Asp-746. Phosphotyrosine; by autocatalysis is present on residues Tyr-779 and Tyr-928. The region spanning 911–975 is the SAM domain; that stretch reads SAVVSVGDWL…LSSVQAMRTQ (65 aa). The PDZ-binding motif lies at 984–986; that stretch reads VPV.

It belongs to the protein kinase superfamily. Tyr protein kinase family. Ephrin receptor subfamily. Heterotetramer upon binding of the ligand. The heterotetramer is composed of an ephrin dimer and a receptor dimer. Oligomerization is probably required to induce biological responses. Interacts (phosphorylated at position Tyr-602) with FYN. Interacts with CDK5, CDK5R1 and NGEF; upon activation by EFNA1 induces NGEF phosphorylation by the kinase CDK5. Interacts with CHN1; effector of EPHA4 in axon guidance linking EPHA4 activation to RAC1 regulation. Interacts (via PDZ motif) with SIPA1L1 (via PDZ domain); controls neuronal morphology through regulation of the RAP1 (RAP1A or RAP1B) and RAP2 (RAP2A, RAP2B or RAP2C) GTPases. Forms a ternary complex composed of ADAM10, CADH1 and EPHA4; within the complex, CADH1 is cleaved by ADAM10 which disrupts adherens junctions. Ubiquitous.

It is found in the cell membrane. The protein localises to the cell projection. It localises to the axon. The protein resides in the dendrite. Its subcellular location is the postsynaptic density membrane. It is found in the early endosome. The protein localises to the cell junction. It localises to the adherens junction. The enzyme catalyses L-tyrosyl-[protein] + ATP = O-phospho-L-tyrosyl-[protein] + ADP + H(+). Its function is as follows. Receptor tyrosine kinase which binds membrane-bound ephrin family ligands residing on adjacent cells, leading to contact-dependent bidirectional signaling into neighboring cells. The signaling pathway downstream of the receptor is referred to as forward signaling while the signaling pathway downstream of the ephrin ligand is referred to as reverse signaling. Highly promiscuous, it has the unique property among Eph receptors to bind and to be physiologically activated by both GPI-anchored ephrin-A and transmembrane ephrin-B ligands including EFNA1 and EFNB3. Upon activation by ephrin ligands, modulates cell morphology and integrin-dependent cell adhesion through regulation of the Rac, Rap and Rho GTPases activity. Plays an important role in the development of the nervous system controlling different steps of axonal guidance including the establishment of the corticospinal projections. May also control the segregation of motor and sensory axons during neuromuscular circuit development. In addition to its role in axonal guidance plays a role in synaptic plasticity. Activated by EFNA1 phosphorylates CDK5 at 'Tyr-15' which in turn phosphorylates NGEF regulating RHOA and dendritic spine morphogenesis. In the nervous system, also plays a role in repair after injury preventing axonal regeneration and in angiogenesis playing a role in central nervous system vascular formation. Additionally, its promiscuity makes it available to participate in a variety of cell-cell signaling regulating for instance the development of the thymic epithelium. During development of the cochlear organ of Corti, regulates pillar cell separation by forming a ternary complex with ADAM10 and CADH1 which facilitates the cleavage of CADH1 by ADAM10 and disruption of adherens junctions. Phosphorylates CAPRIN1, promoting CAPRIN1-dependent formation of a membraneless compartment. The chain is Ephrin type-A receptor 4 (EPHA4) from Homo sapiens (Human).